The sequence spans 855 residues: Lon protease (855 aa).

A Lon N-terminal domain is found at Ile45 to Tyr288. An ATP-binding site is contributed by Gly439–Thr446. Residues Ile674–Lys855 enclose the Lon proteolytic domain. Residues Ser761 and Lys804 contribute to the active site.

Belongs to the peptidase S16 family. As to quaternary structure, homohexamer. Organized in a ring with a central cavity.

The protein resides in the cytoplasm. It carries out the reaction Hydrolysis of proteins in presence of ATP.. Its function is as follows. ATP-dependent serine protease that mediates the selective degradation of mutant and abnormal proteins as well as certain short-lived regulatory proteins. Required for cellular homeostasis and for survival from DNA damage and developmental changes induced by stress. Degrades polypeptides processively to yield small peptide fragments that are 5 to 10 amino acids long. Binds to DNA in a double-stranded, site-specific manner. The protein is Lon protease of Karelsulcia muelleri (strain GWSS) (Sulcia muelleri).